We begin with the raw amino-acid sequence, 381 residues long: V-type proton ATPase subunit C 1-B (381 aa).

The residue at position 2 (Thr-2) is an N-acetylthreonine.

Belongs to the V-ATPase C subunit family. In terms of assembly, V-ATPase is a heteromultimeric enzyme made up of two complexes: the ATP-hydrolytic V1 complex and the proton translocation V0 complex. The V1 complex consists of three catalytic AB heterodimers that form a heterohexamer, three peripheral stalks each consisting of EG heterodimers, one central rotor including subunits D and F, and the regulatory subunits C and H. The proton translocation complex V0 consists of the proton transport subunit a, a ring of proteolipid subunits c9c'', rotary subunit d, subunits e and f, and two accessory subunits.

In terms of biological role, subunit of the V1 complex of vacuolar(H+)-ATPase (V-ATPase), a multisubunit enzyme composed of a peripheral complex (V1) that hydrolyzes ATP and a membrane integral complex (V0) that translocates protons. V-ATPase is responsible for acidifying and maintaining the pH of intracellular compartments and in some cell types, is targeted to the plasma membrane, where it is responsible for acidifying the extracellular environment. Subunit C is necessary for the assembly of the catalytic sector of the enzyme and is likely to have a specific function in its catalytic activity. This chain is V-type proton ATPase subunit C 1-B (atp6v1c1b), found in Danio rerio (Zebrafish).